Consider the following 264-residue polypeptide: Hemin import ATP-binding protein HmuV (264 aa).

In terms of domain architecture, ABC transporter spans 2–242 (IEAVNICVQR…QNLSDAYHCS (241 aa)). Position 34–41 (34–41 (GPNGSGKS)) interacts with ATP.

It belongs to the ABC transporter superfamily. Heme (hemin) importer (TC 3.A.1.14.5) family. In terms of assembly, the complex is composed of two ATP-binding proteins (HmuV), two transmembrane proteins (HmuU) and a solute-binding protein (HmuT).

It localises to the cell inner membrane. Its function is as follows. Part of the ABC transporter complex HmuTUV involved in hemin import. Responsible for energy coupling to the transport system. The chain is Hemin import ATP-binding protein HmuV from Bartonella quintana (strain Toulouse) (Rochalimaea quintana).